Consider the following 670-residue polypeptide: MEVPAKIQKRIERLRQEINDHNYRYYVLSQPTIPDSVYDELFHELQKLEKKYPETITPSSPTQRVGAEPLKVFEPVHHEIPMLSLDNVFDEKGLRAFDKRIRQRLKLDKPFEYVCEPKMDGVALSLLYENGELIRAATRGDGYTGENVTQNTRTIASVPLQLRGNDYPELVEIRGEVLMPREGFAKFNREAEKRGDKTFANPRNAASGSLRQLDPRITAKRPLIFYGYLIGLLKGKDFPKNHCDVLKWFKDWGIPVISEIKVVGGIEGCLDYYEHLVKTREKMPFDIDGIVIKVNSLQVQAELGFVSRAPRWAIAYKFPAQEKMTVVKAIEFQVGRTGVVTPVARLEPVSVSGVTVSNATLHNFDELYRKDVRVGDTVIVRRAGDVIPEVVGPILAKRPKKAKLIKIPSRCPVCHAEVIKPEGEAVARCVGGLYCRAQLRESIKHFASRRALDIEGLGDKLVELFIQEKLIKDITGIYQLKKSAITALPRMGEKSAENLLTAIEKSKKTTLPRFLYALGIRGVGDTIARTLARHFHELDLLMKASIETLQEIRDIGPVVAENIHAFFHQKHNAELINKLIHLGVHWPQEKAVVKSEIAGKTFVLTGALKSLTREEAEEKIERSGGKATSSVSKNTDYVIVGENPGSKYEKAKALGISLIDEEAFLKLLKS.

NAD(+) contacts are provided by residues 35–39, 84–85, and Glu116; these read DSVYD and SL. Catalysis depends on Lys118, which acts as the N6-AMP-lysine intermediate. NAD(+) contacts are provided by Arg139, Glu176, Lys293, and Lys317. The Zn(2+) site is built by Cys411, Cys414, Cys429, and Cys435. Residues 592–670 form the BRCT domain; the sequence is VVKSEIAGKT…EEAFLKLLKS (79 aa).

This sequence belongs to the NAD-dependent DNA ligase family. LigA subfamily. Mg(2+) is required as a cofactor. The cofactor is Mn(2+).

The catalysed reaction is NAD(+) + (deoxyribonucleotide)n-3'-hydroxyl + 5'-phospho-(deoxyribonucleotide)m = (deoxyribonucleotide)n+m + AMP + beta-nicotinamide D-nucleotide.. In terms of biological role, DNA ligase that catalyzes the formation of phosphodiester linkages between 5'-phosphoryl and 3'-hydroxyl groups in double-stranded DNA using NAD as a coenzyme and as the energy source for the reaction. It is essential for DNA replication and repair of damaged DNA. The chain is DNA ligase from Coxiella burnetii (strain Dugway 5J108-111).